A 1411-amino-acid polypeptide reads, in one-letter code: Nuclear pore complex protein Nup160 homolog (1411 aa).

Part of the nuclear pore complex. Interacts with Nup98.

It localises to the nucleus. It is found in the nuclear pore complex. Functionally, functions as a component of the nuclear pore complex (NPC). Involved in poly(A)+ RNA transport. Required for nuclear import of Mad. May play a role in double strand break DNA repair. Essential for nephrocyte development. This Drosophila melanogaster (Fruit fly) protein is Nuclear pore complex protein Nup160 homolog (Nup160).